The chain runs to 734 residues: Predicted GPI-anchored protein 49 (734 aa).

A signal peptide spans 1–16 (MNYITSLLLLSSNTFL). N-linked (GlcNAc...) asparagine glycans are attached at residues Asn27, Asn56, Asn68, and Asn71. Residues 78–145 (DNSDTDIDDS…NESDTQNEND (68 aa)) are disordered. A compositionally biased stretch (low complexity) spans 87–98 (SSSNSEDVSSND). N-linked (GlcNAc...) asparagine glycosylation is found at Asn105, Asn118, Asn136, and Asn180. Acidic residues predominate over residues 110–129 (FSDESDEGNDSDDNGDEVEN). Over residues 130–141 (MENNQANESDTQ) the composition is skewed to polar residues. 2 disordered regions span residues 216-262 (SPKS…LKSK) and 331-360 (DANP…RLPT). Positions 228–259 (SRKKTLKSKSKSKSSKLKHKSRKSHKRRPKLL) are enriched in basic residues. N-linked (GlcNAc...) asparagine glycosylation is found at Asn388 and Asn427. Positions 447–479 (PPRYSNHHSEFTVERPPRPSRTKKRPRIKAKKT) are disordered. Basic and acidic residues predominate over residues 453 to 463 (HHSEFTVERPP). Positions 464-479 (RPSRTKKRPRIKAKKT) are enriched in basic residues. A glycan (N-linked (GlcNAc...) asparagine) is linked at Asn517. A disordered region spans residues 582–653 (KPQETKLHSP…STTSTKPNDQ (72 aa)). Residues 592 to 611 (TSTDTKSSKLMSSSSSNNNK) are compositionally biased toward low complexity. Residues 620–631 (EYNQTQESTSYN) are compositionally biased toward polar residues. Residues Asn622 and Asn631 are each glycosylated (N-linked (GlcNAc...) asparagine). The segment covering 632–650 (TTKAVPKTSVVSSTTSTKP) has biased composition (low complexity). A lipid anchor (GPI-anchor amidated serine) is attached at Ser707. The propeptide at 708–734 (ASQNLSFSVLGLIILLLLLPGLLIIIM) is removed in mature form. Asn711 is a glycosylation site (N-linked (GlcNAc...) asparagine).

Its subcellular location is the cell membrane. This is Predicted GPI-anchored protein 49 (PGA49) from Candida albicans (strain SC5314 / ATCC MYA-2876) (Yeast).